Reading from the N-terminus, the 249-residue chain is Metal-staphylopine import system ATP-binding protein CntF (249 aa).

Residues 2–244 (IKIKDVEKSY…DNAYTRELIE (243 aa)) enclose the ABC transporter domain. An ATP-binding site is contributed by 42 to 49 (GESGSGKS).

This sequence belongs to the ABC transporter superfamily. In terms of assembly, the complex is composed of two ATP-binding proteins (CntD and CntF), two transmembrane proteins (CntB and CntC) and a solute-binding protein (CntA).

It is found in the cell membrane. With respect to regulation, nickel/cobalt import is reduced in the presence of zinc. Part of the ABC transporter complex CntABCDF (Opp1) involved in the uptake of metal in complex with the metallophore staphylopine (StP). Involved in the import of divalent metals ions such as nickel, cobalt and zinc. Probably responsible for energy coupling to the transport system. Plays a major role in nickel/cobalt import in zinc-depleted conditions. Contributes to virulence. Required for full urease activity in vitro. In Staphylococcus aureus (strain NCTC 8325 / PS 47), this protein is Metal-staphylopine import system ATP-binding protein CntF.